The following is a 162-amino-acid chain: CASP-like protein BLE3 (162 aa).

The Cytoplasmic segment spans residues 1 to 7 (MAKVHRL). Residues 8-28 (MNAVLRLAAAAAAATAAVVMV) form a helical membrane-spanning segment. The Extracellular portion of the chain corresponds to 29-50 (TSRETTSFFGIQMEAKYSYTPS). Residues 51 to 71 (FIFFVVAYAVAAAYSLLVLAV) form a helical membrane-spanning segment. Topologically, residues 72 to 85 (PAGSALSRLALTTD) are cytoplasmic. Residues 86-106 (VVLGMVLAGAVASAGAISDIA) form a helical membrane-spanning segment. Over 107-128 (KNGNSHAGWLPVCGQIHAYCNH) the chain is Extracellular. Residues 129–149 (VMAALIAGFVALAVHFVVVMY) traverse the membrane as a helical segment. Residues 150–162 (SLHIVTDVICPCH) lie on the Cytoplasmic side of the membrane.

The protein belongs to the Casparian strip membrane proteins (CASP) family. As to quaternary structure, homodimer and heterodimers.

It localises to the cell membrane. In terms of biological role, involved in cell elongation in rice through dual regulation by brassinolide and auxin. This is CASP-like protein BLE3 (BLE3) from Oryza sativa subsp. indica (Rice).